The primary structure comprises 317 residues: MTATIDDQEKNQRSNPDHEEYQYLDLIRRIINVGEVRPDRTGTGTVALFAPPSFRFSLADNTLPLLTTKRVFLRGVIAELLWFVSGCTDAKMLSSQGVGIWDGNGSKEFLEKVGLGHRREGDLGPVYGFQWRHFGAEYTDADGDYKGKGVDQLQRVIDTIKNNPTDRRIILSAWNPKDLPLMALPPCHMFCQFFVSLPPADSPGSKPKLSCLMYQRSCDLGLGVPFNIASYALLTHMIALITDTEPHEFILQMGDAHVYRDHVEPLKTQLEREPRDFPKLKWARSKEEIGDIDGFKVEDFVVEGYKPWGKIDMKMSA.

DUMP-binding positions include arginine 40 and 167 to 168 (RR). The Nucleophile role is filled by cysteine 187. Residues 216–219 (RSCD), asparagine 227, and 257–259 (HVY) each bind dUMP. Aspartate 219 contacts (6R)-5,10-methylene-5,6,7,8-tetrahydrofolate.

This sequence belongs to the thymidylate synthase family. Homodimer.

The enzyme catalyses dUMP + (6R)-5,10-methylene-5,6,7,8-tetrahydrofolate = 7,8-dihydrofolate + dTMP. It participates in pyrimidine metabolism; dTTP biosynthesis. This chain is Thymidylate synthase (TMP1), found in Cryptococcus neoformans var. neoformans serotype D (strain B-3501A) (Filobasidiella neoformans).